Reading from the N-terminus, the 266-residue chain is Type III pantothenate kinase (266 aa).

6 to 13 (DVGNSHTV) contacts ATP. Substrate is bound at residue 112–115 (GIDR). D114 functions as the Proton acceptor in the catalytic mechanism. D134 contacts K(+). T137 contacts ATP. Substrate is bound at residue T190.

Belongs to the type III pantothenate kinase family. As to quaternary structure, homodimer. NH4(+) serves as cofactor. Requires K(+) as cofactor.

Its subcellular location is the cytoplasm. The enzyme catalyses (R)-pantothenate + ATP = (R)-4'-phosphopantothenate + ADP + H(+). It participates in cofactor biosynthesis; coenzyme A biosynthesis; CoA from (R)-pantothenate: step 1/5. Its function is as follows. Catalyzes the phosphorylation of pantothenate (Pan), the first step in CoA biosynthesis. In Desulfotalea psychrophila (strain LSv54 / DSM 12343), this protein is Type III pantothenate kinase.